The sequence spans 199 residues: Large ribosomal subunit protein uL10 (199 aa).

This sequence belongs to the universal ribosomal protein uL10 family. In terms of assembly, part of the ribosomal stalk of the 50S ribosomal subunit. The N-terminus interacts with L11 and the large rRNA to form the base of the stalk. The C-terminus forms an elongated spine to which L12 dimers bind in a sequential fashion forming a multimeric L10(L12)X complex.

In terms of biological role, forms part of the ribosomal stalk, playing a central role in the interaction of the ribosome with GTP-bound translation factors. The chain is Large ribosomal subunit protein uL10 (rplJ) from Aquifex aeolicus (strain VF5).